We begin with the raw amino-acid sequence, 751 residues long: Photosystem I P700 chlorophyll a apoprotein A1 (751 aa).

8 helical membrane-spanning segments follow: residues 72–95 (IFSA…FHGA), 158–181 (LYCT…FHYH), 197–221 (MNHH…HVSL), 293–311 (TAHH…GHMY), 348–371 (WHAQ…HHMY), 387–413 (LSLF…IFMV), 435–457 (AIIS…LYVH), and 532–550 (FLVH…LILL). Residues Cys-574 and Cys-583 each contribute to the [4Fe-4S] cluster site. A run of 2 helical transmembrane segments spans residues 590–611 (HVFL…HFSW) and 665–687 (LSAY…MFLF). His-676 serves as a coordination point for chlorophyll a'. Residues Met-684 and Tyr-692 each coordinate chlorophyll a. Trp-693 is a binding site for phylloquinone. The helical transmembrane segment at 725–745 (AVGVTHYLLGGIVTTWAFFLA) threads the bilayer.

This sequence belongs to the PsaA/PsaB family. In terms of assembly, the PsaA/B heterodimer binds the P700 chlorophyll special pair and subsequent electron acceptors. PSI consists of a core antenna complex that captures photons, and an electron transfer chain that converts photonic excitation into a charge separation. The cyanobacterial PSI reaction center is composed of one copy each of PsaA,B,C,D,E,F,I,J,K,L,M and X, and forms trimeric complexes. PSI electron transfer chain: 5 chlorophyll a, 1 chlorophyll a', 2 phylloquinones and 3 4Fe-4S clusters. PSI core antenna: 90 chlorophyll a, 22 carotenoids, 3 phospholipids and 1 galactolipid. P700 is a chlorophyll a/chlorophyll a' dimer, A0 is one or more chlorophyll a, A1 is one or both phylloquinones and FX is a shared 4Fe-4S iron-sulfur center. serves as cofactor.

The protein resides in the cellular thylakoid membrane. It catalyses the reaction reduced [plastocyanin] + hnu + oxidized [2Fe-2S]-[ferredoxin] = oxidized [plastocyanin] + reduced [2Fe-2S]-[ferredoxin]. Functionally, psaA and PsaB bind P700, the primary electron donor of photosystem I (PSI), as well as the electron acceptors A0, A1 and FX. PSI is a plastocyanin/cytochrome c6-ferredoxin oxidoreductase, converting photonic excitation into a charge separation, which transfers an electron from the donor P700 chlorophyll pair to the spectroscopically characterized acceptors A0, A1, FX, FA and FB in turn. Oxidized P700 is reduced on the lumenal side of the thylakoid membrane by plastocyanin or cytochrome c6. The sequence is that of Photosystem I P700 chlorophyll a apoprotein A1 from Gloeothece citriformis (strain PCC 7424) (Cyanothece sp. (strain PCC 7424)).